Reading from the N-terminus, the 322-residue chain is Adenine deaminase (322 aa).

Zn(2+)-binding residues include H11, H13, and H189. Catalysis depends on E192, which acts as the Proton donor. Zn(2+) is bound at residue D270. Residue D271 participates in substrate binding.

Belongs to the metallo-dependent hydrolases superfamily. Adenosine and AMP deaminases family. Adenine deaminase type 2 subfamily. Zn(2+) is required as a cofactor.

It catalyses the reaction adenine + H2O + H(+) = hypoxanthine + NH4(+). Catalyzes the hydrolytic deamination of adenine to hypoxanthine. Plays an important role in the purine salvage pathway and in nitrogen catabolism. The sequence is that of Adenine deaminase from Rhizobium leguminosarum bv. trifolii (strain WSM2304).